Consider the following 69-residue polypeptide: U2-agatoxin-Ao1o (69 aa).

An N-terminal signal peptide occupies residues 1–20; sequence MKAIISLLLISAMVFSMFEA. Residues 21–34 constitute a propeptide that is removed on maturation; it reads VPVRRRFTAFEGER. 3 cysteine pairs are disulfide-bonded: cysteine 36/cysteine 52, cysteine 43/cysteine 57, and cysteine 51/cysteine 67. Leucine amide is present on leucine 68.

It belongs to the neurotoxin 01 (U2-agtx) family. As to expression, expressed by the venom gland.

It is found in the secreted. In terms of biological role, insect active toxin causing rapid but reversible paralysis in crickets. No activity shown in mammals. Does not show effect on mammalian voltage-gated calcium channels. This is U2-agatoxin-Ao1o from Agelena orientalis (Funnel-web spider).